The chain runs to 173 residues: Ribonuclease H (173 aa).

Positions 1 to 20 (MKATSKAKTHPPGATAAKDP) are disordered. The RNase H type-1 domain occupies 20–162 (PQKQVIIYTD…CDVLSKEAAG (143 aa)). The Mg(2+) site is built by Asp-29, Glu-67, Asp-89, and Asp-154.

It belongs to the RNase H family. Monomer. Mg(2+) is required as a cofactor.

Its subcellular location is the cytoplasm. The enzyme catalyses Endonucleolytic cleavage to 5'-phosphomonoester.. In terms of biological role, endonuclease that specifically degrades the RNA of RNA-DNA hybrids. The protein is Ribonuclease H of Syntrophus aciditrophicus (strain SB).